Reading from the N-terminus, the 348-residue chain is MNHYIRAIGSMLILVYSMLIAFLFIDKVFVNIIFFQGMFYTQIFGIPVFLFLNLLIVLLCIIVGSVLAYKINQQNDWIISQIERSIEGQTVGINDQNIELYTETIDIYHTLVPLNQELHRLRMKTQNLTNENYNINDVKVKKIIEDERQRLARELHDSVSQQLFAASMMLSAIKESKLEPPLNQQIPILEKMVQDSQLEMRALLLHLRPIGLKDKSLGEGIKDLVIDLQKKVPMKVVHEIQDFEVPKGIEDHLFRITQEAISNTLRHSNGTKVTVELFNQEDYLLLRIQDNGKGFNVDEKFEQSYGLKNMRERALEIGATFHIVSLPDSGTRIEVKAPLNKEENSSGD.

Transmembrane regions (helical) follow at residues 13-33 and 43-63; these read ILVYSMLIAFLFIDKVFVNII and IFGIPVFLFLNLLIVLLCIIV. The Histidine kinase domain maps to 150–341; that stretch reads RLARELHDSV…RIEVKAPLNK (192 aa).

It localises to the cell membrane. It catalyses the reaction ATP + protein L-histidine = ADP + protein N-phospho-L-histidine.. Its function is as follows. Member of the two-component regulatory system VraS/VraR involved in the control of the cell wall peptidoglycan biosynthesis. Probably activates VraR by phosphorylation. In Staphylococcus epidermidis (strain ATCC 35984 / DSM 28319 / BCRC 17069 / CCUG 31568 / BM 3577 / RP62A), this protein is Sensor protein VraS (vraS).